Consider the following 212-residue polypeptide: LexA repressor (212 aa).

The segment at residues 26–46 (VREIGEAVGLSSTSTVHGHID) is a DNA-binding region (H-T-H motif). Active-site for autocatalytic cleavage activity residues include Ser128 and Lys171.

Belongs to the peptidase S24 family. Homodimer.

It carries out the reaction Hydrolysis of Ala-|-Gly bond in repressor LexA.. In terms of biological role, represses a number of genes involved in the response to DNA damage (SOS response), including recA and lexA. In the presence of single-stranded DNA, RecA interacts with LexA causing an autocatalytic cleavage which disrupts the DNA-binding part of LexA, leading to derepression of the SOS regulon and eventually DNA repair. This is LexA repressor from Oenococcus oeni (strain ATCC BAA-331 / PSU-1).